We begin with the raw amino-acid sequence, 211 residues long: MKLTLVQIFFMMLLLLLGLGVGLGVGLQMAAAVLEESDQLLDEFLSSDSQDKAEATKEGLASRSTETLLVSNKEVVQPEDTIISEDEVGGDRMLRAEVLLHSNKDYLRSDVMDRECNALMALKVKSKDHTCIPQYIFIHEELDAVKAVCKSPAVACDLKGGKCHKSPRPFDLTFCKLSKSGQVIPHCNYVTFILEKYILMSCSDMKVQITS.

Residues Met1–Gly24 form the signal peptide.

It belongs to the pancreatic ribonuclease family. Post-translationally, the N-terminus is blocked. Glycosylated.

The protein resides in the secreted. Functionally, secreted proximal epididymal protein required for post-testicular sperm maturation and male fertility. May be involved in sperm adhesion to the egg zona pellucida. Does not have ribonuclease activity. The polypeptide is Inactive ribonuclease-like protein 10 (RNASE10) (Bos taurus (Bovine)).